Reading from the N-terminus, the 1049-residue chain is Presequence protease, mitochondrial (1049 aa).

The N-terminal 39 residues, 1 to 39, are a transit peptide targeting the mitochondrion; that stretch reads MLRSYLHLGRHRTPAFRQPLGRLLRPTASILQYAQSRTL. Residue H113 participates in Zn(2+) binding. E116 functions as the Proton acceptor in the catalytic mechanism. Residue H117 participates in Zn(2+) binding. Residue E189 is part of the active site. A Zn(2+)-binding site is contributed by E222.

The protein belongs to the peptidase M16 family. PreP subfamily. As to quaternary structure, monomer and homodimer; homodimerization is induced by binding of the substrate. Zn(2+) serves as cofactor.

Its subcellular location is the mitochondrion intermembrane space. It localises to the mitochondrion matrix. Functionally, degrades mitochondrial transit peptides after their cleavage in the intermembrane space or in the matrix, and presequence peptides; clearance of these peptides is required to keep the presequence processing machinery running. Preferentially cleaves the N-terminal side of paired basic amino acid residues. Also degrades other unstructured peptides. May function as an ATP-dependent peptidase as opposed to a metalloendopeptidase. The chain is Presequence protease, mitochondrial (cym1) from Emericella nidulans (strain FGSC A4 / ATCC 38163 / CBS 112.46 / NRRL 194 / M139) (Aspergillus nidulans).